The following is a 154-amino-acid chain: Ribonuclease 8 (154 aa).

The N-terminal stretch at 1–27 (MAPARAGCCPLLLLLLGLWVAQIPVSA) is a signal peptide. His42 functions as the Proton acceptor in the catalytic mechanism. Intrachain disulfides connect Cys64–Cys118 and Cys89–Cys96. Substrate-binding positions include 65 to 69 (KDLNT) and Lys90. Residue His149 is the Proton donor of the active site.

This sequence belongs to the pancreatic ribonuclease family.

The protein localises to the secreted. Its function is as follows. Has a low ribonuclease activity. The sequence is that of Ribonuclease 8 (RNASE8) from Chlorocebus aethiops (Green monkey).